A 149-amino-acid polypeptide reads, in one-letter code: NADH-quinone oxidoreductase subunit I 1 (149 aa).

4Fe-4S ferredoxin-type domains lie at 51 to 82 (LKSF…VQGT) and 93 to 122 (THYV…YSTE). [4Fe-4S] cluster is bound by residues cysteine 62, cysteine 65, cysteine 68, cysteine 72, cysteine 102, cysteine 105, cysteine 108, and cysteine 112.

The protein belongs to the complex I 23 kDa subunit family. In terms of assembly, NDH-1 is composed of 14 different subunits. Subunits NuoA, H, J, K, L, M, N constitute the membrane sector of the complex. It depends on [4Fe-4S] cluster as a cofactor.

Its subcellular location is the cell inner membrane. It catalyses the reaction a quinone + NADH + 5 H(+)(in) = a quinol + NAD(+) + 4 H(+)(out). Its function is as follows. NDH-1 shuttles electrons from NADH, via FMN and iron-sulfur (Fe-S) centers, to quinones in the respiratory chain. The immediate electron acceptor for the enzyme in this species is believed to be ubiquinone. Couples the redox reaction to proton translocation (for every two electrons transferred, four hydrogen ions are translocated across the cytoplasmic membrane), and thus conserves the redox energy in a proton gradient. The chain is NADH-quinone oxidoreductase subunit I 1 from Syntrophobacter fumaroxidans (strain DSM 10017 / MPOB).